The primary structure comprises 418 residues: Tyrosine--tRNA ligase (418 aa).

Tyr-34 is an L-tyrosine binding site. A 'HIGH' region motif is present at residues 39–48; that stretch reads PTADSLHLGH. L-tyrosine-binding residues include Tyr-169 and Gln-173. Positions 229-233 match the 'KMSKS' region motif; sequence KFGKS. Lys-232 provides a ligand contact to ATP. Positions 352 to 418 constitute an S4 RNA-binding domain; the sequence is HNIVEILVAA…GKKKYAVLTY (67 aa).

This sequence belongs to the class-I aminoacyl-tRNA synthetase family. TyrS type 1 subfamily. As to quaternary structure, homodimer.

The protein localises to the cytoplasm. It catalyses the reaction tRNA(Tyr) + L-tyrosine + ATP = L-tyrosyl-tRNA(Tyr) + AMP + diphosphate + H(+). In terms of biological role, catalyzes the attachment of tyrosine to tRNA(Tyr) in a two-step reaction: tyrosine is first activated by ATP to form Tyr-AMP and then transferred to the acceptor end of tRNA(Tyr). In Streptococcus pyogenes serotype M1, this protein is Tyrosine--tRNA ligase.